A 169-amino-acid polypeptide reads, in one-letter code: MALVEGNNGVSGGAVSFSEEQEALVLKSWAIMKKDSANIGLRFFLKIFEVAPSASQMFSFLRNSDVPLEKNPKLKTHAMSVFVMTCEAAAQLRKAGKVTVRDTTLKRLGATHFKYGVGDAHFEVTRFALLETIKEAVPVDMWSPAMKSAWSEAYNQLVAAIKQEMKPAE.

Residues 16–166 (SFSEEQEALV…LVAAIKQEMK (151 aa)) form the Globin domain. The short motif at 49–53 (EVAPS) is the Homodimerization element. The heme b site is built by S59, K73, H77, R107, T111, and H112. Positions 119–131 (DAHFEVTRFALLE) match the Homodimerization motif.

The protein belongs to the plant globin family. In terms of assembly, homodimer. Heme b is required as a cofactor. In terms of tissue distribution, expressed in leaves, but not in roots. Present in embryonic organs including embryos, coleoptiles and seminal roots.

It localises to the cytoplasm. The protein resides in the nucleus. It carries out the reaction Fe(III)-heme b-[protein] + nitric oxide + H2O = Fe(II)-heme b-[protein] + nitrite + 2 H(+). In terms of biological role, phytoglobin that reduces nitrite to nitric oxide under anoxic conditions (e.g. during flooding or in waterlogged soil). May not function as an oxygen storage or transport protein. Has an unusually high affinity for O(2) through an hexacoordinate heme iron because of a very low dissociation constant. Promotes tolerance to low potassium K(+) conditions. The chain is Anaerobic nitrite reductase NSHB2 from Oryza sativa subsp. japonica (Rice).